Here is a 469-residue protein sequence, read N- to C-terminus: Nuclear hormone receptor family member nhr-154 (469 aa).

Residues 80–159 constitute a DNA-binding region (nuclear receptor); it reads PSKCLVCRNP…VGMNPMAIQA (80 aa). 2 consecutive NR C4-type zinc fingers follow at residues 83-103 and 119-142; these read CLVC…CNGC and CAKQ…CRAC. Positions 230-459 constitute an NR LBD domain; sequence LDSKPVLVVT…KMGTTFRKCI (230 aa).

Belongs to the nuclear hormone receptor family.

It is found in the nucleus. Functionally, orphan nuclear receptor. This chain is Nuclear hormone receptor family member nhr-154 (nhr-154), found in Caenorhabditis elegans.